Reading from the N-terminus, the 488-residue chain is Solanidine UDP-glucose glucosyltransferase 1 (488 aa).

The Proton acceptor role is filled by H23. H23 provides a ligand contact to an anthocyanidin. Catalysis depends on D127, which acts as the Charge relay. Residues V352, Q354, H369, N373, S374, and E377 each contribute to the UDP-alpha-D-glucose site. A392 is an an anthocyanidin binding site. UDP-alpha-D-glucose contacts are provided by D393 and Q394.

Belongs to the UDP-glycosyltransferase family. Expressed in the shoot apical meristem (SAM) and tuber.

The catalysed reaction is solasodine + UDP-alpha-D-glucose = solasodine 3-beta-D-glucoside + UDP + H(+). It catalyses the reaction solanidine + UDP-alpha-D-glucose = solanidine 3-O-beta-D-glucopyranoside + UDP + H(+). It carries out the reaction tomatidine + UDP-alpha-D-glucose = tomatidine 3-O-beta-D-glucopyranoside + UDP + H(+). In terms of biological role, glucosyltransferase involved in the glucosylation of the steroidal alkaloid aglycons solanidine, solasodine and tomatidine to produce their corresponding glycoalkaloids. The protein is Solanidine UDP-glucose glucosyltransferase 1 of Solanum tuberosum (Potato).